A 197-amino-acid chain; its full sequence is uncharacterized protein (197 aa).

Residues 1 to 135 (MKTPWKFLAR…ERGKRANARV (135 aa)) are disordered. The segment covering 14-32 (RQPSGKTQESSAGNDTGSK) has biased composition (polar residues). A compositionally biased stretch (basic and acidic residues) spans 83-96 (IHADEAQTTARDEA). Over residues 116–132 (SQRKPRIKRRERGKRAN) the composition is skewed to basic residues.

It to Rhizobium NGR234A y4nF and y4aO.

This is an uncharacterized protein from Rhizobium meliloti (strain 1021) (Ensifer meliloti).